Reading from the N-terminus, the 573-residue chain is Trehalose synthase (573 aa).

D70 contacts substrate. Ca(2+) is bound at residue N112. Residues H113 and Q178 each coordinate substrate. D180 is a binding site for Ca(2+). R208 contacts substrate. D210 serves as the catalytic Nucleophile. Positions 214, 215, and 217 each coordinate Ca(2+). E252 functions as the Proton donor in the catalytic mechanism. Residues H326 and D327 each coordinate substrate.

It belongs to the glycosyl hydrolase 13 family. TreS subfamily.

It carries out the reaction D-maltose = alpha,alpha-trehalose. Catalyzes the reversible interconversion of maltose and alpha,alpha-trehalose by transglucosylation. The polypeptide is Trehalose synthase (treS) (Pimelobacter sp. (strain R48)).